Reading from the N-terminus, the 374-residue chain is Chaperone protein DnaJ (374 aa).

The J domain maps to 5–69 (NYYQILGVSK…QKRAAYDRLG (65 aa)). The CR-type zinc finger occupies 137–215 (GIEKNISFSS…CHGMGRYHKQ (79 aa)). Residues cysteine 150, cysteine 153, cysteine 167, cysteine 170, cysteine 189, cysteine 192, cysteine 203, and cysteine 206 each contribute to the Zn(2+) site. CXXCXGXG motif repeat units follow at residues 150–157 (CDTCHGSG), 167–174 (CDACSGVG), 189–196 (CHKCQGNG), and 203–210 (CKKCHGMG).

The protein belongs to the DnaJ family. As to quaternary structure, homodimer. Requires Zn(2+) as cofactor.

Its subcellular location is the cytoplasm. Functionally, participates actively in the response to hyperosmotic and heat shock by preventing the aggregation of stress-denatured proteins and by disaggregating proteins, also in an autonomous, DnaK-independent fashion. Unfolded proteins bind initially to DnaJ; upon interaction with the DnaJ-bound protein, DnaK hydrolyzes its bound ATP, resulting in the formation of a stable complex. GrpE releases ADP from DnaK; ATP binding to DnaK triggers the release of the substrate protein, thus completing the reaction cycle. Several rounds of ATP-dependent interactions between DnaJ, DnaK and GrpE are required for fully efficient folding. Also involved, together with DnaK and GrpE, in the DNA replication of plasmids through activation of initiation proteins. This is Chaperone protein DnaJ from Rickettsia massiliae (strain Mtu5).